A 287-amino-acid chain; its full sequence is Probable ABC transporter extracellular-binding protein YckB (287 aa).

Residues 1-24 form the signal peptide; the sequence is MKSFMHSKAVIFSFTMAFFLILAA. The N-palmitoyl cysteine moiety is linked to residue Cys25. Residue Cys25 is the site of S-diacylglycerol cysteine attachment.

This sequence belongs to the bacterial solute-binding protein 3 family.

Its subcellular location is the cell membrane. Its function is as follows. Probably part of a binding-protein-dependent transport system. This is Probable ABC transporter extracellular-binding protein YckB (yckB) from Bacillus subtilis (strain 168).